Reading from the N-terminus, the 335-residue chain is [Citrate [pro-3S]-lyase] ligase (335 aa).

The region spanning M1 to S131 is the N-acetyltransferase domain.

The catalysed reaction is holo-[citrate lyase ACP] + acetate + ATP = acetyl-[citrate lyase ACP] + AMP + diphosphate. Acetylation of prosthetic group (2-(5''-phosphoribosyl)-3'-dephosphocoenzyme-A) of the gamma subunit of citrate lyase. In Haemophilus influenzae (strain ATCC 51907 / DSM 11121 / KW20 / Rd), this protein is [Citrate [pro-3S]-lyase] ligase (citC).